The following is a 370-amino-acid chain: tRNA-specific 2-thiouridylase MnmA (370 aa).

ATP contacts are provided by residues 24 to 31 (AMSGGVDS) and leucine 50. Residue cysteine 119 is the Nucleophile of the active site. Cysteine 119 and cysteine 215 are oxidised to a cystine. Residue glycine 143 coordinates ATP. The segment at 165–167 (KDQ) is interaction with tRNA. The active-site Cysteine persulfide intermediate is the cysteine 215.

It belongs to the MnmA/TRMU family.

The protein resides in the cytoplasm. It catalyses the reaction S-sulfanyl-L-cysteinyl-[protein] + uridine(34) in tRNA + AH2 + ATP = 2-thiouridine(34) in tRNA + L-cysteinyl-[protein] + A + AMP + diphosphate + H(+). Functionally, catalyzes the 2-thiolation of uridine at the wobble position (U34) of tRNA, leading to the formation of s(2)U34. This Wolbachia pipientis wMel protein is tRNA-specific 2-thiouridylase MnmA.